Reading from the N-terminus, the 331-residue chain is Adenosine deaminase (331 aa).

Zn(2+)-binding residues include His12 and His14. His14, Asp16, and Gly170 together coordinate substrate. His197 provides a ligand contact to Zn(2+). Glu200 functions as the Proton donor in the catalytic mechanism. A Zn(2+)-binding site is contributed by Asp278.

The protein belongs to the metallo-dependent hydrolases superfamily. Adenosine and AMP deaminases family. Adenosine deaminase subfamily. Zn(2+) is required as a cofactor.

The catalysed reaction is adenosine + H2O + H(+) = inosine + NH4(+). The enzyme catalyses 2'-deoxyadenosine + H2O + H(+) = 2'-deoxyinosine + NH4(+). Catalyzes the hydrolytic deamination of adenosine and 2-deoxyadenosine. This is Adenosine deaminase from Vibrio vulnificus (strain CMCP6).